We begin with the raw amino-acid sequence, 537 residues long: Polyadenylate-binding protein 6 (537 aa).

RRM domains lie at 21 to 99 (GSLY…WSQR), 112 to 188 (ANLY…KFIN), 202 to 279 (TNVY…KALK), and 304 to 381 (SNLY…VAER). The segment at 503-537 (KATTSEENRKEERRLTLSGKLSPEVKVEESGKQLQ) is disordered. Composition is skewed to basic and acidic residues over residues 506 to 517 (TSEENRKEERRL) and 525 to 537 (PEVK…KQLQ).

This sequence belongs to the polyadenylate-binding protein type-1 family. In terms of tissue distribution, expressed at low levels in leaves and young seedlings.

Its subcellular location is the cytoplasm. The protein localises to the nucleus. Binds the poly(A) tail of mRNA. Appears to be an important mediator of the multiple roles of the poly(A) tail in mRNA biogenesis, stability and translation. In Arabidopsis thaliana (Mouse-ear cress), this protein is Polyadenylate-binding protein 6 (PAB6).